Here is a 1215-residue protein sequence, read N- to C-terminus: Zinc finger SWIM domain-containing protein 6 (1215 aa).

Disordered stretches follow at residues methionine 1–proline 46 and alanine 133–alanine 161. Gly residues-rich tracts occupy residues proline 18–tyrosine 38 and alanine 133–serine 155. Residues cysteine 246 to isoleucine 283 form an SWIM-type zinc finger.

Involved in nervous system development, important for striatal morphology and motor regulation. This Homo sapiens (Human) protein is Zinc finger SWIM domain-containing protein 6.